A 320-amino-acid polypeptide reads, in one-letter code: Stress-involved WYL domain-containing regulator (320 aa).

In terms of domain architecture, HTH deoR-type spans 7 to 65 (TTGRVVQLLGLLQSRRVWTGEELAERLGVTGRSVRRDIERLRELGYPVHASKGQGGGYQ). Residues 24 to 43 (WTGEELAERLGVTGRSVRRD) constitute a DNA-binding region (H-T-H motif). The region spanning 139–218 (DTAVAPDVLM…SDVRATGTTF (80 aa)) is the WYL domain. The tract at residues 245–320 (VRYFAPEKVV…MADRLRRAVR (76 aa)) is WCX domain.

As to quaternary structure, homodimer.

Transcriptional activator. Acts as a transcriptional activator of the MSMEG_1357-56 operon upon genotoxic stress. Controls adjacent genes that belong to the DinB/YfiT-like putative metalloenzymes superfamily by upregulating their expression in response to various genotoxic stress conditions, including exposure to H(2)O(2) or the natural antibiotic zeocin, as well as mitomycin C (MMC), diamide and UVC radiation. Upon genotoxic stress, upregulates two genes encoding proteins of the DinB/YfiT-like putative metalloenzymes superfamily, MSMEG_1357 and MSMEG_1356. Binds different forms of single-stranded DNA (ssDNA) with high affinity, primarily through its characteristic WYL domain. Binds nucleic acids with single-stranded regions, such as polyT 20mer ssDNA, 5' tailed, 3' tailed and fork DNA, but not ssRNA. In Mycolicibacterium smegmatis (strain ATCC 700084 / mc(2)155) (Mycobacterium smegmatis), this protein is Stress-involved WYL domain-containing regulator.